The chain runs to 131 residues: Runt-related transcription factor 2 (131 aa).

In terms of domain architecture, Runt spans 1–10 (MRVGVPPQIP). A disordered region spans residues 1-75 (MRVGVPPQIP…SSTRGTGLPV (75 aa)). Residue Arg11 is modified to Asymmetric dimethylarginine. 2 stretches are compositionally biased toward polar residues: residues 13–36 (SLNSAPSPFNPQGQSQITDPRQAQ) and 43–70 (YDQSYPSYLSQMTSPSIHSTTPLSSTRG).

As to quaternary structure, heterodimer of an alpha and a beta subunit. The alpha subunit binds DNA as a monomer and through the Runt domain. DNA-binding is increased by heterodimerization. Interacts with XRCC6 (Ku70) and XRCC5 (Ku80). Interacts with CCNB1, KAT6A and KAT6B. Interacts with HIVEP3. Interacts with IFI204. Interaction with SATB2; the interaction results in enhanced DNA binding and transactivation by these transcription factors. Binds to HIPK3. Interacts with FOXO1 (via a C-terminal region); the interaction inhibits RUNX2 transcriptional activity towards BGLAP. This interaction is prevented on insulin or IGF1 stimulation as FOXO1 is exported from the nucleus. Interacts with FOXP3. Interacts with TMEM119. Interacts with OLFM2. Interacts with IPO7; the interaction inhibits RUNX2 nuclear translocation in osteoblasts. Phosphorylated; probably by MAP kinases (MAPK). Phosphorylation by HIPK3 is required for the SPEN/MINT and FGF2 transactivation during osteoblastic differentiation.

The protein resides in the nucleus. Its subcellular location is the cytoplasm. Transcription factor involved in osteoblastic differentiation and skeletal morphogenesis. Essential for the maturation of osteoblasts and both intramembranous and endochondral ossification. CBF binds to the core site, 5'-PYGPYGGT-3', of a number of enhancers and promoters, including murine leukemia virus, polyomavirus enhancer, T-cell receptor enhancers, osteocalcin, osteopontin, bone sialoprotein, alpha 1(I) collagen, LCK, IL-3 and GM-CSF promoters. Inhibits KAT6B-dependent transcriptional activation. In osteoblasts, supports transcription activation: synergizes with SPEN/MINT to enhance FGFR2-mediated activation of the osteocalcin FGF-responsive element (OCFRE). This chain is Runt-related transcription factor 2 (RUNX2), found in Equus caballus (Horse).